A 347-amino-acid chain; its full sequence is UDP-N-acetylenolpyruvoylglucosamine reductase (347 aa).

In terms of domain architecture, FAD-binding PCMH-type spans 17–187 (IEQLAAQLVV…TAVGLKFAKA (171 aa)). R163 is an active-site residue. S232 acts as the Proton donor in catalysis. E327 is a catalytic residue.

The protein belongs to the MurB family. The cofactor is FAD.

It localises to the cytoplasm. The catalysed reaction is UDP-N-acetyl-alpha-D-muramate + NADP(+) = UDP-N-acetyl-3-O-(1-carboxyvinyl)-alpha-D-glucosamine + NADPH + H(+). The protein operates within cell wall biogenesis; peptidoglycan biosynthesis. Its function is as follows. Cell wall formation. This chain is UDP-N-acetylenolpyruvoylglucosamine reductase, found in Vibrio cholerae serotype O1 (strain ATCC 39315 / El Tor Inaba N16961).